A 158-amino-acid chain; its full sequence is MIRIGHGFDVHAFGQDRPLMICGVEVPYHTGFIAHSDGDVALHALTDALLGAVALGDIGKLFPDTDMQYKNADSRKLLIEAYRQVRAQGYKVANVDVTIIAQAPKMRPYIDQMRQTIADDLQCDVMQVNVKATTTEKLGFTGRGEGIACEAVALLIKQ.

Aspartate 9 and histidine 11 together coordinate a divalent metal cation. 4-CDP-2-C-methyl-D-erythritol 2-phosphate contacts are provided by residues 9–11 (DVH) and 35–36 (HS). Residue histidine 43 participates in a divalent metal cation binding. 4-CDP-2-C-methyl-D-erythritol 2-phosphate contacts are provided by residues 57-59 (DIG), 62-66 (FPDTD), 133-136 (TTTE), phenylalanine 140, and arginine 143.

This sequence belongs to the IspF family. In terms of assembly, homotrimer. Requires a divalent metal cation as cofactor.

The enzyme catalyses 4-CDP-2-C-methyl-D-erythritol 2-phosphate = 2-C-methyl-D-erythritol 2,4-cyclic diphosphate + CMP. The protein operates within isoprenoid biosynthesis; isopentenyl diphosphate biosynthesis via DXP pathway; isopentenyl diphosphate from 1-deoxy-D-xylulose 5-phosphate: step 4/6. Its function is as follows. Involved in the biosynthesis of isopentenyl diphosphate (IPP) and dimethylallyl diphosphate (DMAPP), two major building blocks of isoprenoid compounds. Catalyzes the conversion of 4-diphosphocytidyl-2-C-methyl-D-erythritol 2-phosphate (CDP-ME2P) to 2-C-methyl-D-erythritol 2,4-cyclodiphosphate (ME-CPP) with a corresponding release of cytidine 5-monophosphate (CMP). The chain is 2-C-methyl-D-erythritol 2,4-cyclodiphosphate synthase from Actinobacillus pleuropneumoniae serotype 7 (strain AP76).